The chain runs to 152 residues: MENNEAPSPSGSNNNDFPILPPPPNANDNYNQFGDHQIRNNNAAQKKLQQTQAKVDEVVGIMRVNVEKVLERDQKLSELGERADQLEQGASQFEQQAGKLKRKQWWANMKMMIILGVIAVVLLIIVLVSVWPSSSDSGSGGGNKAITQAPPH.

Over residues 1 to 16 (MENNEAPSPSGSNNND) the composition is skewed to polar residues. The tract at residues 1–30 (MENNEAPSPSGSNNNDFPILPPPPNANDNY) is disordered. Topologically, residues 1–110 (MENNEAPSPS…KRKQWWANMK (110 aa)) are cytoplasmic. One can recognise a v-SNARE coiled-coil homology domain in the interval 47–107 (KLQQTQAKVD…GKLKRKQWWA (61 aa)). The helical; Anchor for type IV membrane protein transmembrane segment at 111-130 (MMIILGVIAVVLLIIVLVSV) threads the bilayer. The Vesicular segment spans residues 131 to 152 (WPSSSDSGSGGGNKAITQAPPH). The segment at 133–152 (SSSDSGSGGGNKAITQAPPH) is disordered.

The protein belongs to the synaptobrevin family. In terms of assembly, part of the SNARE core complex containing Snap25 and syntaxin. Ubiquitinated by gzl, regulating endocytic trafficking. In wing imaginal disks, ubiquitination by gzl promotes transcytosis of wingless (wg) to the basolateral surface. In terms of tissue distribution, not nervous system-specific; abundant in cells of the gut and Malpighian tubules.

Its subcellular location is the cytoplasmic vesicle. It localises to the secretory vesicle. The protein localises to the synaptic vesicle membrane. The protein resides in the cell membrane. Functionally, involved in the targeting and/or fusion of transport vesicles to their target membrane. The chain is Synaptobrevin from Drosophila melanogaster (Fruit fly).